Consider the following 195-residue polypeptide: ATP synthase subunit b (195 aa).

The helical transmembrane segment at 28–48 (IFPNVYVLIAHVISLIFLLLL) threads the bilayer.

The protein belongs to the ATPase B chain family. F-type ATPases have 2 components, F(1) - the catalytic core - and F(0) - the membrane proton channel. F(1) has five subunits: alpha(3), beta(3), gamma(1), delta(1), epsilon(1). F(0) has three main subunits: a(1), b(2) and c(10-14). The alpha and beta chains form an alternating ring which encloses part of the gamma chain. F(1) is attached to F(0) by a central stalk formed by the gamma and epsilon chains, while a peripheral stalk is formed by the delta and b chains.

It localises to the cell membrane. F(1)F(0) ATP synthase produces ATP from ADP in the presence of a proton or sodium gradient. F-type ATPases consist of two structural domains, F(1) containing the extramembraneous catalytic core and F(0) containing the membrane proton channel, linked together by a central stalk and a peripheral stalk. During catalysis, ATP synthesis in the catalytic domain of F(1) is coupled via a rotary mechanism of the central stalk subunits to proton translocation. Functionally, component of the F(0) channel, it forms part of the peripheral stalk, linking F(1) to F(0). In Malacoplasma penetrans (strain HF-2) (Mycoplasma penetrans), this protein is ATP synthase subunit b.